Reading from the N-terminus, the 148-residue chain is Ribonuclease H (148 aa).

Positions 1-143 (MNQVVIYTDG…ADMLANKGVE (143 aa)) constitute an RNase H type-1 domain. Mg(2+) is bound by residues Asp9, Glu47, Asp69, and Asp135.

It belongs to the RNase H family. Monomer. Mg(2+) is required as a cofactor.

Its subcellular location is the cytoplasm. It carries out the reaction Endonucleolytic cleavage to 5'-phosphomonoester.. Its function is as follows. Endonuclease that specifically degrades the RNA of RNA-DNA hybrids. The sequence is that of Ribonuclease H from Acidovorax sp. (strain JS42).